The primary structure comprises 103 residues: Large ribosomal subunit protein uL24 (103 aa).

Belongs to the universal ribosomal protein uL24 family. As to quaternary structure, part of the 50S ribosomal subunit.

One of two assembly initiator proteins, it binds directly to the 5'-end of the 23S rRNA, where it nucleates assembly of the 50S subunit. Functionally, one of the proteins that surrounds the polypeptide exit tunnel on the outside of the subunit. This chain is Large ribosomal subunit protein uL24, found in Christiangramia forsetii (strain DSM 17595 / CGMCC 1.15422 / KT0803) (Gramella forsetii).